The following is a 409-amino-acid chain: Peptidase T (409 aa).

His-78 serves as a coordination point for Zn(2+). The active site involves Asp-80. Zn(2+) is bound at residue Asp-140. Catalysis depends on Glu-173, which acts as the Proton acceptor. Zn(2+)-binding residues include Glu-174, Asp-196, and His-379.

It belongs to the peptidase M20B family. Requires Zn(2+) as cofactor.

Its subcellular location is the cytoplasm. The catalysed reaction is Release of the N-terminal residue from a tripeptide.. Cleaves the N-terminal amino acid of tripeptides. In Escherichia coli (strain SE11), this protein is Peptidase T.